We begin with the raw amino-acid sequence, 662 residues long: DNA ligase (662 aa).

NAD(+) contacts are provided by residues 32 to 36 (DAEYD), 75 to 76 (SL), and Glu-106. The active-site N6-AMP-lysine intermediate is Lys-108. NAD(+) is bound by residues Arg-129, Glu-164, Lys-271, and Lys-295. Positions 389, 392, 407, and 413 each coordinate Zn(2+). The region spanning 580-662 (SSNSVLNNKI…HKVISLGVFK (83 aa)) is the BRCT domain.

Belongs to the NAD-dependent DNA ligase family. LigA subfamily. Requires Mg(2+) as cofactor. Mn(2+) is required as a cofactor.

It catalyses the reaction NAD(+) + (deoxyribonucleotide)n-3'-hydroxyl + 5'-phospho-(deoxyribonucleotide)m = (deoxyribonucleotide)n+m + AMP + beta-nicotinamide D-nucleotide.. Its function is as follows. DNA ligase that catalyzes the formation of phosphodiester linkages between 5'-phosphoryl and 3'-hydroxyl groups in double-stranded DNA using NAD as a coenzyme and as the energy source for the reaction. It is essential for DNA replication and repair of damaged DNA. In Wolbachia pipientis wMel, this protein is DNA ligase.